We begin with the raw amino-acid sequence, 350 residues long: S-adenosylmethionine:tRNA ribosyltransferase-isomerase (350 aa).

Belongs to the QueA family. Monomer.

It localises to the cytoplasm. It carries out the reaction 7-aminomethyl-7-carbaguanosine(34) in tRNA + S-adenosyl-L-methionine = epoxyqueuosine(34) in tRNA + adenine + L-methionine + 2 H(+). Its pathway is tRNA modification; tRNA-queuosine biosynthesis. Transfers and isomerizes the ribose moiety from AdoMet to the 7-aminomethyl group of 7-deazaguanine (preQ1-tRNA) to give epoxyqueuosine (oQ-tRNA). The protein is S-adenosylmethionine:tRNA ribosyltransferase-isomerase of Bacillus cereus (strain B4264).